The sequence spans 236 residues: 5'-methylthioadenosine/S-adenosylhomocysteine nucleosidase (236 aa).

Glutamate 12 (proton acceptor) is an active-site residue. Residues glycine 78, isoleucine 153, and 174–175 (ME) contribute to the substrate site. Aspartate 198 (proton donor) is an active-site residue.

It belongs to the PNP/UDP phosphorylase family. MtnN subfamily.

The enzyme catalyses S-adenosyl-L-homocysteine + H2O = S-(5-deoxy-D-ribos-5-yl)-L-homocysteine + adenine. The catalysed reaction is S-methyl-5'-thioadenosine + H2O = 5-(methylsulfanyl)-D-ribose + adenine. It catalyses the reaction 5'-deoxyadenosine + H2O = 5-deoxy-D-ribose + adenine. It functions in the pathway amino-acid biosynthesis; L-methionine biosynthesis via salvage pathway; S-methyl-5-thio-alpha-D-ribose 1-phosphate from S-methyl-5'-thioadenosine (hydrolase route): step 1/2. Its function is as follows. Catalyzes the irreversible cleavage of the glycosidic bond in both 5'-methylthioadenosine (MTA) and S-adenosylhomocysteine (SAH/AdoHcy) to adenine and the corresponding thioribose, 5'-methylthioribose and S-ribosylhomocysteine, respectively. Also cleaves 5'-deoxyadenosine, a toxic by-product of radical S-adenosylmethionine (SAM) enzymes, into 5-deoxyribose and adenine. This Shewanella baltica (strain OS155 / ATCC BAA-1091) protein is 5'-methylthioadenosine/S-adenosylhomocysteine nucleosidase.